A 297-amino-acid chain; its full sequence is Tryptophan 2,3-dioxygenase (297 aa).

Residues 51-55, Tyr-113, and Arg-117 each bind substrate; that span reads FIIQH. His-240 provides a ligand contact to heme. Residue Thr-254 participates in substrate binding.

It belongs to the tryptophan 2,3-dioxygenase family. As to quaternary structure, homotetramer. Heme serves as cofactor.

It carries out the reaction L-tryptophan + O2 = N-formyl-L-kynurenine. Its pathway is amino-acid degradation; L-tryptophan degradation via kynurenine pathway; L-kynurenine from L-tryptophan: step 1/2. Functionally, heme-dependent dioxygenase that catalyzes the oxidative cleavage of the L-tryptophan (L-Trp) pyrrole ring and converts L-tryptophan to N-formyl-L-kynurenine. Catalyzes the oxidative cleavage of the indole moiety. The polypeptide is Tryptophan 2,3-dioxygenase (Xanthomonas oryzae pv. oryzae (strain MAFF 311018)).